Reading from the N-terminus, the 162-residue chain is MSGLTHFDAAGHAHMVDVGDKQETRRIAIARGTIRMLPATFALIRDGKAKKGDVLGVARIAAIQGAKRTADLIPLCHPLALTRVAVEFELDDALPGVHCVVQVETFGRTGVEMEALTAVQVGLLTVYDMCKAVDRGMVITDVSVREKRGGKSGDWKAEDAAG.

Residues 75 to 77 and 113 to 114 each bind substrate; these read LCH and ME. Asp-128 is an active-site residue.

Belongs to the MoaC family. In terms of assembly, homohexamer; trimer of dimers.

The enzyme catalyses (8S)-3',8-cyclo-7,8-dihydroguanosine 5'-triphosphate = cyclic pyranopterin phosphate + diphosphate. It participates in cofactor biosynthesis; molybdopterin biosynthesis. Catalyzes the conversion of (8S)-3',8-cyclo-7,8-dihydroguanosine 5'-triphosphate to cyclic pyranopterin monophosphate (cPMP). The protein is Cyclic pyranopterin monophosphate synthase of Burkholderia cenocepacia (strain HI2424).